The primary structure comprises 358 residues: uncharacterized protein (358 aa).

An EF-hand domain is found at 229 to 264; the sequence is KQLHEFKLAFDYFDQEKNGWLDYEHFELCLKSQGYN. Ca(2+)-binding residues include Asp242, Asn246, Trp248, and His253.

This is an uncharacterized protein from Caenorhabditis elegans.